The following is a 228-amino-acid chain: Lipoprotein-releasing system ATP-binding protein LolD (228 aa).

An ABC transporter domain is found at 6 to 228 (LRLSGIEKTY…LSDGRLSAES (223 aa)). 43 to 50 (APSGAGKS) provides a ligand contact to ATP.

It belongs to the ABC transporter superfamily. Lipoprotein translocase (TC 3.A.1.125) family. In terms of assembly, the complex is composed of two ATP-binding proteins (LolD) and two transmembrane proteins (LolC and LolE).

The protein localises to the cell inner membrane. Functionally, part of the ABC transporter complex LolCDE involved in the translocation of mature outer membrane-directed lipoproteins, from the inner membrane to the periplasmic chaperone, LolA. Responsible for the formation of the LolA-lipoprotein complex in an ATP-dependent manner. The polypeptide is Lipoprotein-releasing system ATP-binding protein LolD (Ruegeria pomeroyi (strain ATCC 700808 / DSM 15171 / DSS-3) (Silicibacter pomeroyi)).